A 201-amino-acid chain; its full sequence is CASP-like protein 1E1 (201 aa).

Residues 1–36 (MESQFRPGFDVSQGAGGRASKFGDVVAPTSSTQLPG) are Cytoplasmic-facing. The chain crosses the membrane as a helical span at residues 37 to 57 (IILRIVAIVLTFISAVVMGAA). At 58 to 87 (RQTTTVTGIDAETALLTSITVTVKSTYSAA) the chain is on the extracellular side. The chain crosses the membrane as a helical span at residues 88-108 (YVYFVVANVLVFFYSVVSLVL). The Cytoplasmic portion of the chain corresponds to 109–127 (SMVNKARLTSMSLPFSIAD). A helical membrane pass occupies residues 128-148 (LLMVVLLFSSNGAAAAISVVA). Residues 149-173 (EKGQQNLAGWDKICNLFGGLCARVN) lie on the Extracellular side of the membrane. Residues 174–194 (AAIVLSMLASVAYVILVVFGM) form a helical membrane-spanning segment. The Cytoplasmic segment spans residues 195–201 (ANLRRSQ).

It belongs to the Casparian strip membrane proteins (CASP) family. As to quaternary structure, homodimer and heterodimers.

It localises to the cell membrane. This is CASP-like protein 1E1 from Musa acuminata (Banana).